A 797-amino-acid polypeptide reads, in one-letter code: Outer membrane protein assembly factor BamA (797 aa).

The N-terminal stretch at 1-19 (MKKLLIASLLFGTTTTVFA) is a signal peptide. POTRA domains follow at residues 22–89 (FVAK…VVAK), 90–170 (SIIS…INED), 173–259 (AKLA…VNEG), 262–341 (YDLR…VDAG), and 344–418 (LTVR…VKER).

This sequence belongs to the BamA family. In terms of assembly, part of the Bam complex.

It localises to the cell outer membrane. Its function is as follows. Part of the outer membrane protein assembly complex, which is involved in assembly and insertion of beta-barrel proteins into the outer membrane. In Haemophilus influenzae, this protein is Outer membrane protein assembly factor BamA.